The following is a 126-amino-acid chain: Probable prefoldin subunit 4 (126 aa).

The protein belongs to the prefoldin subunit beta family. In terms of assembly, heterohexamer of two PFD-alpha type and four PFD-beta type subunits.

Its function is as follows. Binds specifically to cytosolic chaperonin (c-CPN) and transfers target proteins to it. Binds to nascent polypeptide chain and promotes folding in an environment in which there are many competing pathways for nonnative proteins. Appears to play a non-essential role. In Caenorhabditis briggsae, this protein is Probable prefoldin subunit 4.